Consider the following 487-residue polypeptide: MRVENHSPSLSKLNPPEAGSGDPTAIGRRLSGIRRAPLPHVSAGSDGEAAAAGKIGAFLRKAVAAQSYGLMFANGKLFEATGDALEKRGQYGFSALQRLDGLSRRNLAAVEARLGALDSAERGLKERIMTGAWHFRHQSNAALDDGKTAAIASNHLLARESRSSGGNTFAGDKALLSNHDFVFFGVEFSGRGKQDKPLNHKHSTMDFGANAYVVPDTLPACRHGYLTLTDHFFNRVPGGREAEHQDFVGSFPQMGAETGRWIHEGKYRQNAPIFNYRDMKAAVALHLIEFLRDSKDAAFKAYVFDQAMQSGQALDRVLNSVFQAEFHIPRLMATTDYAKHPLRPMLLKEAVDSVNLPALSGLVSSKGDAVTAMWHAIDKGKDAVAAHLLGNWRFEAGDFASAPPGFYHELNYALSEHGASVYILDQFLSRGWAAVNAPFEHVNSGETMLDNAVKYGNREMAAALIKHGADRNLLSEWNGGKLDALLA.

Polar residues predominate over residues 1-12; it reads MRVENHSPSLSK. The segment at 1–27 is disordered; that stretch reads MRVENHSPSLSKLNPPEAGSGDPTAIG. NAD(+) contacts are provided by His137, Gln138, Ser139, Leu143, Ala150, Ala152, Asn154, and Leu157. His137 serves as a coordination point for nicotinamide. ADP-D-ribose contacts are provided by Ser139 and Leu143. Positions 152, 154, 157, 166, 167, 168, and 183 each coordinate ADP-D-ribose. Residue Asn167 participates in NAD(+) binding. Residue Phe183 participates in NAD(+) binding. Nicotinamide is bound by residues Phe183, Phe184, His202, and Phe207. His202 contributes to the NAD(+) binding site. ADP-D-ribose is bound by residues Phe207 and Asp230. NAD(+) is bound by residues Asp230 and Glu325. Glu325 lines the nicotinamide pocket. Glu325 is an active-site residue. ANK repeat units follow at residues 368 to 398 and 444 to 476; these read DAVT…EAGD and SGET…LLSE.

It belongs to the OspC family. As to quaternary structure, interacts with host calmodulin (CALM1, CALM2 and/or CALM3); specifically interacts with the apo form of calmodulin and calmodulin-binding is required to mediate arginine ADP-riboxanation of host caspases.

It localises to the secreted. It is found in the host cytoplasm. The enzyme catalyses L-arginyl-[protein] + NAD(+) = ADP-riboxanated L-argininyl-[protein] + nicotinamide + NH4(+) + H(+). Interaction with host calmodulin (CALM1, CALM2 and/or CALM3) is required to mediate arginine ADP-riboxanation of host caspases. In terms of biological role, ADP-riboxanase effector that inhibits host cell programmed cell death. Acts by mediating arginine ADP-riboxanation of host caspases (CASP3, CASP7, CASP8 and CASP9), blocking their processing and activation. ADP-riboxanation of host apoptotic caspases (CASP3, CASP7, CASP8 and CASP9) prevents their activation, thereby inhibiting host cell apoptosis. ADP-riboxanation of host CASP8 also inhibits host cell necroptosis. ADP-riboxanation of host CASP3 also abolishes pyroptosis by preventing its ability to cleave GSDME. May also able to inactivate CASP4/CASP11, blocking inhibiting LPS-induced pyroptosis; however this activity is unsure in vivo. ADP-riboxanation takes place in several steps: CopC first binds host caspases and NAD(+); NAD(+) is hydrolyzed to nicotinamide and ADP-D-ribose. CopC then transfers the ADP-D-ribose to the modified arginine of caspases and forms the ADP-D-ribose-deacylization on arginine, leading to deamination to remove one N-omega group on target arginine. This is Arginine ADP-riboxanase CopC from Chromobacterium violaceum (strain ATCC 12472 / DSM 30191 / JCM 1249 / CCUG 213 / NBRC 12614 / NCIMB 9131 / NCTC 9757 / MK).